Consider the following 590-residue polypeptide: Multidrug and toxin extrusion protein 1 (590 aa).

Residues 1–59 lie on the Cytoplasmic side of the membrane; the sequence is MDSITSYNVTQMNGDTKQEKCDDVLSTSSTQKFCGGCRKKLRSLLPVNYKTEIVELLKL. Residues 60-80 traverse the membrane as a helical segment; it reads AGPVFISQLMIFLISFVSTVF. Topologically, residues 81–88 are extracellular; it reads CGHLGKTE. The chain crosses the membrane as a helical span at residues 89–109; the sequence is LAGVALAIAVINVTGISIGSG. Topologically, residues 110 to 137 are cytoplasmic; sequence LASACDTLISQTFGSNNLKRVGVILQRG. The chain crosses the membrane as a helical span at residues 138–158; it reads ILILLLACFPCWALLINTEPI. At 159-167 the chain is on the extracellular side; sequence LLAVRQSPN. Residues 168–188 traverse the membrane as a helical segment; sequence VASLSQLYVKIFMPALPAAFM. Over 189–199 the chain is Cytoplasmic; that stretch reads YQLQGRYLQNQ. A helical transmembrane segment spans residues 200 to 222; sequence GIIWPQVITGAAGNILNALINYV. Topologically, residues 223-231 are extracellular; the sequence is FLHLLELGV. A helical transmembrane segment spans residues 232–254; it reads AGSAAANTISQYSLAVFLYVYIR. Over 255 to 274 the chain is Cytoplasmic; sequence WKNLHKATWDGWSRDCLQEW. The chain crosses the membrane as a helical span at residues 275–294; sequence GAFIRLALPSMLMLCVEWWT. At 295 to 313 the chain is on the extracellular side; that stretch reads YEIGGFLAGLISETELGAQ. The chain crosses the membrane as a helical span at residues 314–334; sequence SVVYELATIAYMFPLGFAVAA. Residues 335–351 lie on the Cytoplasmic side of the membrane; that stretch reads SVRVGNALGAGNTERAK. A helical membrane pass occupies residues 352–372; sequence LSAKVALVCGVLVSCVVATLI. At 373-395 the chain is on the extracellular side; sequence GCTKDVIAYIFTTEEEIVSRVSQ. Residues 396-416 form a helical membrane-spanning segment; that stretch reads VMIMYGFFHLFDAIAGITGGI. The Cytoplasmic segment spans residues 417–430; that stretch reads VRGAGKQLLGALCN. Residues 431 to 451 form a helical membrane-spanning segment; the sequence is IVGYYFVGFPTGVSLMFALSM. Glycine 452 is a topological domain (extracellular). The helical transmembrane segment at 453 to 473 threads the bilayer; the sequence is IIGLWIGFFGCVFLQSLFFII. Residues 474-565 are Cytoplasmic-facing; that stretch reads LIYKLDWKKA…TTKQLIVRRG (92 aa). A helical transmembrane segment spans residues 566–586; it reads LAVLLMVLILAGGIVLNEMLV. The Extracellular portion of the chain corresponds to 587-590; that stretch reads RYLR.

The protein belongs to the multi antimicrobial extrusion (MATE) (TC 2.A.66.1) family.

It localises to the cell membrane. Solute transporter for tetraethylammonium (TEA), cimetidine, metformin, guanidine, N-methylnicotinamide (NMN) and also the zwitterionic cephalosporin cephalexin. Responsible for the secretion of cationic drugs across the brush border membranes. This is Multidrug and toxin extrusion protein 1 (slc47a1) from Danio rerio (Zebrafish).